The sequence spans 248 residues: MRFDGREKNALREIEVTPDYLMHPEGSVLIASGNTKVICSASVETKVPPFMRGEGRGWISAEYSMLPRATNTRNIRESSKGKVTGRTMEIQRLIGRALRAVVDLDALGERTIWLDCDVIQADGGTRTASITGAFIAMVMAIAKLDEEVPFTKFPVKDFLAATSVGVLEEGGTVLDLNYVEDSAAQVDMNIIMTGSGAFVELQGTGEEATFSETELAELIALGKKGISELIEIQKETLGDKITARIKGE.

Residues Arg-86 and 124-126 contribute to the phosphate site; that span reads GTR.

This sequence belongs to the RNase PH family. In terms of assembly, homohexameric ring arranged as a trimer of dimers.

It carries out the reaction tRNA(n+1) + phosphate = tRNA(n) + a ribonucleoside 5'-diphosphate. Phosphorolytic 3'-5' exoribonuclease that plays an important role in tRNA 3'-end maturation. Removes nucleotide residues following the 3'-CCA terminus of tRNAs; can also add nucleotides to the ends of RNA molecules by using nucleoside diphosphates as substrates, but this may not be physiologically important. Probably plays a role in initiation of 16S rRNA degradation (leading to ribosome degradation) during starvation. This is Ribonuclease PH from Listeria innocua serovar 6a (strain ATCC BAA-680 / CLIP 11262).